The following is a 419-amino-acid chain: Serine hydroxymethyltransferase (419 aa).

Residues Leu-122 and 126–128 (GHL) each bind (6S)-5,6,7,8-tetrahydrofolate. Lys-231 is subject to N6-(pyridoxal phosphate)lysine. 354-356 (SPF) is a binding site for (6S)-5,6,7,8-tetrahydrofolate.

This sequence belongs to the SHMT family. In terms of assembly, homodimer. It depends on pyridoxal 5'-phosphate as a cofactor.

The protein resides in the cytoplasm. It catalyses the reaction (6R)-5,10-methylene-5,6,7,8-tetrahydrofolate + glycine + H2O = (6S)-5,6,7,8-tetrahydrofolate + L-serine. Its pathway is one-carbon metabolism; tetrahydrofolate interconversion. It functions in the pathway amino-acid biosynthesis; glycine biosynthesis; glycine from L-serine: step 1/1. In terms of biological role, catalyzes the reversible interconversion of serine and glycine with tetrahydrofolate (THF) serving as the one-carbon carrier. This reaction serves as the major source of one-carbon groups required for the biosynthesis of purines, thymidylate, methionine, and other important biomolecules. Also exhibits THF-independent aldolase activity toward beta-hydroxyamino acids, producing glycine and aldehydes, via a retro-aldol mechanism. The polypeptide is Serine hydroxymethyltransferase (Exiguobacterium sibiricum (strain DSM 17290 / CCUG 55495 / CIP 109462 / JCM 13490 / 255-15)).